The sequence spans 160 residues: SsrA-binding protein (160 aa).

The tract at residues 134–160 (RKAHDKREAVKERDWNRDKARLMRDRG) is disordered. Positions 138 to 160 (DKREAVKERDWNRDKARLMRDRG) are enriched in basic and acidic residues.

This sequence belongs to the SmpB family.

The protein resides in the cytoplasm. Its function is as follows. Required for rescue of stalled ribosomes mediated by trans-translation. Binds to transfer-messenger RNA (tmRNA), required for stable association of tmRNA with ribosomes. tmRNA and SmpB together mimic tRNA shape, replacing the anticodon stem-loop with SmpB. tmRNA is encoded by the ssrA gene; the 2 termini fold to resemble tRNA(Ala) and it encodes a 'tag peptide', a short internal open reading frame. During trans-translation Ala-aminoacylated tmRNA acts like a tRNA, entering the A-site of stalled ribosomes, displacing the stalled mRNA. The ribosome then switches to translate the ORF on the tmRNA; the nascent peptide is terminated with the 'tag peptide' encoded by the tmRNA and targeted for degradation. The ribosome is freed to recommence translation, which seems to be the essential function of trans-translation. This is SsrA-binding protein from Azorhizobium caulinodans (strain ATCC 43989 / DSM 5975 / JCM 20966 / LMG 6465 / NBRC 14845 / NCIMB 13405 / ORS 571).